The chain runs to 163 residues: 3-hydroxyacyl-[acyl-carrier-protein] dehydratase FabZ (163 aa).

Histidine 58 is a catalytic residue.

This sequence belongs to the thioester dehydratase family. FabZ subfamily.

It localises to the cytoplasm. It carries out the reaction a (3R)-hydroxyacyl-[ACP] = a (2E)-enoyl-[ACP] + H2O. Functionally, involved in unsaturated fatty acids biosynthesis. Catalyzes the dehydration of short chain beta-hydroxyacyl-ACPs and long chain saturated and unsaturated beta-hydroxyacyl-ACPs. The polypeptide is 3-hydroxyacyl-[acyl-carrier-protein] dehydratase FabZ (Francisella tularensis subsp. tularensis (strain FSC 198)).